The chain runs to 194 residues: dCTP deaminase (194 aa).

DCTP is bound by residues 110 to 115 (RSSLAR), aspartate 128, 136 to 138 (VLE), tyrosine 171, lysine 178, and glutamine 182. Glutamate 138 acts as the Proton donor/acceptor in catalysis.

This sequence belongs to the dCTP deaminase family. Homotrimer.

The catalysed reaction is dCTP + H2O + H(+) = dUTP + NH4(+). Its pathway is pyrimidine metabolism; dUMP biosynthesis; dUMP from dCTP (dUTP route): step 1/2. Functionally, catalyzes the deamination of dCTP to dUTP. The polypeptide is dCTP deaminase (Haemophilus ducreyi (strain 35000HP / ATCC 700724)).